The following is a 155-amino-acid chain: Small ribosomal subunit protein uS7 (155 aa).

It belongs to the universal ribosomal protein uS7 family. As to quaternary structure, part of the 30S ribosomal subunit. Contacts proteins S9 and S11.

Functionally, one of the primary rRNA binding proteins, it binds directly to 16S rRNA where it nucleates assembly of the head domain of the 30S subunit. Is located at the subunit interface close to the decoding center, probably blocks exit of the E-site tRNA. The chain is Small ribosomal subunit protein uS7 from Xylella fastidiosa (strain M12).